We begin with the raw amino-acid sequence, 400 residues long: Protection of telomeres homolog 1 (400 aa).

It belongs to the telombin family. As to expression, expressed in sperm and oocytes.

The protein localises to the nucleus. It localises to the nucleus envelope. Its subcellular location is the chromosome. It is found in the telomere. In terms of biological role, telomeric DNA-binding protein, which binds to single-stranded C-rich repeat sequences, with high specificity to the 5'-GCCTAA-3' sequence. Repeat sequence binding can be at the 5' or 3' telomeric end. May have a role in protecting the 5' end of the C-rich strand of the telomere. Acts redundantly with pot-2 to negatively regulate telomerase-mediated telomere extension. Also regulates telomere length by the telomerase-independent telomere maintenance pathway called ALT (alternative lengthening of telomeres). Through sun-1, anchors telomeres to the nuclear envelope in embryos. The protein is Protection of telomeres homolog 1 of Caenorhabditis elegans.